The sequence spans 264 residues: Transcription factor bHLH52 (264 aa).

One can recognise a bHLH domain in the interval 134 to 183; sequence RELSAQSIAARKRRRRITEKTQELGKLIPGSQKHNTAEMFNAAAKYVKFL.

Homodimer. Expressed constitutively in roots, leaves, stems, and flowers.

Its subcellular location is the nucleus. The sequence is that of Transcription factor bHLH52 (BHLH52) from Arabidopsis thaliana (Mouse-ear cress).